The chain runs to 423 residues: MDGLMWATRILCLLSLCGVTLGHLHLECDFITQLRDDELACLQAAEGTNNTSLGCPGTWDGLLCWPPTGSGQWVSLPCPEFFSHFGSDTGFVKRDCTITGWSNPFPPYPVACPVPLELLTKEKSYFSTVKIIYTTGHSISIVALCVAIAILVALRRLHCPRNYIHTQLFATFILKASAVFLKDAAIFQGDSTDHCSMSTVLCKVSVAISHLATMTNFSWLLAEAVYLSCLLASTSPRSKPAFWWLVLAGWGLPVLCTGTWVGCKLAFEDTECWDLDNSSPCWWIIKGPIVLSVGVNFGLFLNIICILLRKLEPAQGGLHTRAQYWRLSKSTLLLIPLFGIHYIIFNFLPDSAGLDIRVPLELGLGSFQGFIVAVLYCFLNQEVRTEISRKWYGHDPELLPARRTCTEWTTPPRSRLKVLTSEC.

Positions 1-22 (MDGLMWATRILCLLSLCGVTLG) are cleaved as a signal peptide. Over 23–130 (HLHLECDFIT…KEKSYFSTVK (108 aa)) the chain is Extracellular. 3 disulfides stabilise this stretch: Cys-41-Cys-64, Cys-55-Cys-96, and Cys-78-Cys-112. 2 N-linked (GlcNAc...) asparagine glycosylation sites follow: Asn-49 and Asn-50. A helical membrane pass occupies residues 131-151 (IIYTTGHSISIVALCVAIAIL). Residues 152–167 (VALRRLHCPRNYIHTQ) lie on the Cytoplasmic side of the membrane. The chain crosses the membrane as a helical span at residues 168–188 (LFATFILKASAVFLKDAAIFQ). The Extracellular portion of the chain corresponds to 189 to 210 (GDSTDHCSMSTVLCKVSVAISH). The helical transmembrane segment at 211–231 (LATMTNFSWLLAEAVYLSCLL) threads the bilayer. The Cytoplasmic portion of the chain corresponds to 232 to 240 (ASTSPRSKP). A helical membrane pass occupies residues 241-261 (AFWWLVLAGWGLPVLCTGTWV). Residues 262 to 283 (GCKLAFEDTECWDLDNSSPCWW) lie on the Extracellular side of the membrane. The helical transmembrane segment at 284-304 (IIKGPIVLSVGVNFGLFLNII) threads the bilayer. Over 305–331 (CILLRKLEPAQGGLHTRAQYWRLSKST) the chain is Cytoplasmic. Residues 332 to 352 (LLLIPLFGIHYIIFNFLPDSA) form a helical membrane-spanning segment. The Extracellular segment spans residues 353 to 357 (GLDIR). The helical transmembrane segment at 358–378 (VPLELGLGSFQGFIVAVLYCF) threads the bilayer. Topologically, residues 379 to 423 (LNQEVRTEISRKWYGHDPELLPARRTCTEWTTPPRSRLKVLTSEC) are cytoplasmic.

Belongs to the G-protein coupled receptor 2 family. Pituitary gland.

Its subcellular location is the cell membrane. Its function is as follows. Receptor for GRF, coupled to G proteins which activate adenylyl cyclase. Stimulates somatotroph cell growth, growth hormone gene transcription and growth hormone secretion. This is Growth hormone-releasing hormone receptor (Ghrhr) from Mus musculus (Mouse).